A 401-amino-acid polypeptide reads, in one-letter code: uncharacterized protein (401 aa).

[4Fe-4S] cluster is bound by residues cysteine 7, cysteine 13, cysteine 16, and cysteine 94. Positions 230, 259, 280, and 328 each coordinate S-adenosyl-L-methionine. The active-site Nucleophile is cysteine 355.

The protein belongs to the class I-like SAM-binding methyltransferase superfamily. RNA M5U methyltransferase family.

This is an uncharacterized protein from Chlamydia pneumoniae (Chlamydophila pneumoniae).